A 138-amino-acid polypeptide reads, in one-letter code: Basic phospholipase A2 B (138 aa).

The first 16 residues, 1–16 (MRALWIVAVLLLGVEG), serve as a signal peptide directing secretion. Cystine bridges form between cysteine 42–cysteine 131, cysteine 44–cysteine 60, cysteine 59–cysteine 111, cysteine 65–cysteine 138, cysteine 66–cysteine 104, cysteine 73–cysteine 97, and cysteine 91–cysteine 102. Positions 43, 45, and 47 each coordinate Ca(2+). Histidine 63 is a catalytic residue. Residue aspartate 64 participates in Ca(2+) binding. Aspartate 105 is a catalytic residue.

The protein belongs to the phospholipase A2 family. Group II subfamily. D49 sub-subfamily. It depends on Ca(2+) as a cofactor. Expressed by the venom gland.

It is found in the secreted. It carries out the reaction a 1,2-diacyl-sn-glycero-3-phosphocholine + H2O = a 1-acyl-sn-glycero-3-phosphocholine + a fatty acid + H(+). Functionally, snake venom phospholipase A2 (PLA2) that shows potent hemolytic activity, and exhibits medium anticoagulant effects by binding to factor Xa (F10) and inhibiting the prothrombinase activity (IC(50) is 90 nM). It is one of the few phospholipases A2 capable of hydrolyzing the phospholipids of E.coli membranes in the presence of a bactericidal/permeability-increasing protein (BPI) of neutrophils. PLA2 catalyzes the calcium-dependent hydrolysis of the 2-acyl groups in 3-sn-phosphoglycerides. This Gloydius halys (Chinese water mocassin) protein is Basic phospholipase A2 B.